Consider the following 38-residue polypeptide: Beta-defensin 1 (38 aa).

3 cysteine pairs are disulfide-bonded: Cys-5–Cys-34, Cys-12–Cys-27, and Cys-17–Cys-35.

The protein belongs to the beta-defensin family. As to quaternary structure, monomer. Homodimer. As to expression, neutrophilic granules.

The protein localises to the secreted. The protein resides in the membrane. Has bactericidal activity. Active against E.coli ML35 but not against S.aureus 502A. May act as a ligand for C-C chemokine receptor CCR6. Positively regulates the sperm motility and bactericidal activity in a CCR6-dependent manner. Binds to CCR6 and triggers Ca2+ mobilization in the sperm which is important for its motility. The sequence is that of Beta-defensin 1 (DEFB1) from Bos taurus (Bovine).